The following is a 547-amino-acid chain: G protein-coupled receptor associated sorting protein 3 (547 aa).

The span at 1–10 (MAGTKNKTRA) shows a compositional bias: basic residues. Disordered regions lie at residues 1–32 (MAGT…EATG) and 80–102 (TLGK…STCK).

This sequence belongs to the GPRASP family. In terms of assembly, homodimer. In terms of tissue distribution, highly expressed in brain. Not expressed in lung or liver. Down-regulated in brain from patients suffering from Alzheimer disease.

Its subcellular location is the cytoplasm. It is found in the nucleus. Survival and differentiation promoting protein that plays a role in the regulation of neurosynaptogenesis. Induces phosphatase PP2A activity which results in APP dephosphorylation and inhibits BACE1-mediated processing of APP. This Homo sapiens (Human) protein is G protein-coupled receptor associated sorting protein 3.